We begin with the raw amino-acid sequence, 555 residues long: Glutamine--tRNA ligase (555 aa).

The 'HIGH' region motif lies at 35-45 (PEPNGYLHIGH). ATP contacts are provided by residues 36-38 (EPN) and 42-48 (HIGHAKS). L-glutamine contacts are provided by D68 and Y213. Residues T232 and 262 to 263 (RL) each bind ATP. The 'KMSKS' region signature appears at 269–273 (ITSKR).

Belongs to the class-I aminoacyl-tRNA synthetase family. In terms of assembly, monomer.

The protein localises to the cytoplasm. The enzyme catalyses tRNA(Gln) + L-glutamine + ATP = L-glutaminyl-tRNA(Gln) + AMP + diphosphate. This is Glutamine--tRNA ligase from Ectopseudomonas mendocina (strain ymp) (Pseudomonas mendocina).